We begin with the raw amino-acid sequence, 375 residues long: Succinyl-diaminopimelate desuccinylase (375 aa).

Zn(2+) is bound at residue His-66. Asp-68 is a catalytic residue. A Zn(2+)-binding site is contributed by Asp-99. The active-site Proton acceptor is the Glu-133. Positions 134, 162, and 348 each coordinate Zn(2+).

Belongs to the peptidase M20A family. DapE subfamily. In terms of assembly, homodimer. The cofactor is Zn(2+). Co(2+) is required as a cofactor.

It carries out the reaction N-succinyl-(2S,6S)-2,6-diaminopimelate + H2O = (2S,6S)-2,6-diaminopimelate + succinate. The protein operates within amino-acid biosynthesis; L-lysine biosynthesis via DAP pathway; LL-2,6-diaminopimelate from (S)-tetrahydrodipicolinate (succinylase route): step 3/3. In terms of biological role, catalyzes the hydrolysis of N-succinyl-L,L-diaminopimelic acid (SDAP), forming succinate and LL-2,6-diaminopimelate (DAP), an intermediate involved in the bacterial biosynthesis of lysine and meso-diaminopimelic acid, an essential component of bacterial cell walls. This chain is Succinyl-diaminopimelate desuccinylase, found in Escherichia coli O7:K1 (strain IAI39 / ExPEC).